The sequence spans 115 residues: Ig kappa chain V region 3315 (115 aa).

Positions 1–24 (AQIVMTQTPSSVSAAVGGTVTINC) are framework-1. Residues 25 to 37 (QSSQSVYENGRLS) are complementarity-determining-1. A framework-2 region spans residues 38-52 (WFQQKPGQPPKRLIY). Residues 53 to 59 (RASTLAS) form a complementarity-determining-2 region. Residues 60-91 (GVSSRFTGSGSGTQFTLSISDVQCDDAATYYC) are framework-3. Residues 92-104 (LGNYDCSSGDSFT) form a complementarity-determining-3 region. Residues 105-114 (FGGGTEVVVK) form a framework-4 region.

This chain is Ig kappa chain V region 3315, found in Oryctolagus cuniculus (Rabbit).